The sequence spans 208 residues: Small ribosomal subunit protein uS4 (208 aa).

The 64-residue stretch at 98-161 (RRLDNVVYRL…RKIPVLAEAQ (64 aa)) folds into the S4 RNA-binding domain.

Belongs to the universal ribosomal protein uS4 family. In terms of assembly, part of the 30S ribosomal subunit. Contacts protein S5. The interaction surface between S4 and S5 is involved in control of translational fidelity.

Functionally, one of the primary rRNA binding proteins, it binds directly to 16S rRNA where it nucleates assembly of the body of the 30S subunit. In terms of biological role, with S5 and S12 plays an important role in translational accuracy. This Desulfovibrio desulfuricans (strain ATCC 27774 / DSM 6949 / MB) protein is Small ribosomal subunit protein uS4.